Reading from the N-terminus, the 61-residue chain is Metallothionein-2B (61 aa).

The residue at position 1 (Met-1) is an N-acetylmethionine. Positions 1 to 29 are beta; the sequence is MDPNCSCATGDSCTCASSCKCKECKCTSC. Residues Cys-5, Cys-7, Cys-13, Cys-15, Cys-19, Cys-21, Cys-24, Cys-26, Cys-29, Cys-33, Cys-34, Cys-36, Cys-37, Cys-41, Cys-44, Cys-48, Cys-50, Cys-57, Cys-59, and Cys-60 each contribute to the a divalent metal cation site. The tract at residues 30 to 61 is alpha; that stretch reads KKSCCSCCPAGCTKCAQGCICKGASDKCSCCA.

This sequence belongs to the metallothionein superfamily. Type 1 family. Monomer.

Functionally, metallothioneins have a high content of cysteine residues that bind various heavy metals; these proteins are transcriptionally regulated by both heavy metals and glucocorticoids. The protein is Metallothionein-2B of Oryctolagus cuniculus (Rabbit).